The chain runs to 114 residues: Probable 4-amino-4-deoxy-L-arabinose-phosphoundecaprenol flippase subunit ArnE (114 aa).

3 helical membrane-spanning segments follow: residues 41 to 61 (PWLI…IYLL), 64 to 84 (LPLS…LVGS), and 94 to 114 (YHNW…GGLL). An EamA domain is found at 43 to 112 (LIASVAALGC…IIVGALLLGG (70 aa)).

It belongs to the ArnE family. In terms of assembly, heterodimer of ArnE and ArnF.

The protein localises to the cell inner membrane. It participates in bacterial outer membrane biogenesis; lipopolysaccharide biosynthesis. Its function is as follows. Translocates 4-amino-4-deoxy-L-arabinose-phosphoundecaprenol (alpha-L-Ara4N-phosphoundecaprenol) from the cytoplasmic to the periplasmic side of the inner membrane. This is Probable 4-amino-4-deoxy-L-arabinose-phosphoundecaprenol flippase subunit ArnE from Aeromonas hydrophila subsp. hydrophila (strain ATCC 7966 / DSM 30187 / BCRC 13018 / CCUG 14551 / JCM 1027 / KCTC 2358 / NCIMB 9240 / NCTC 8049).